We begin with the raw amino-acid sequence, 367 residues long: Alginate lyase (367 aa).

The signal sequence occupies residues 1 to 24; sequence MTLLKRISSPALLALALFGGAAHA. Residues 63–64, 136–137, and Tyr-254 each bind substrate; these read SK and HT.

The protein belongs to the polysaccharide lyase 5 family.

It is found in the periplasm. It carries out the reaction Eliminative cleavage of alginate to give oligosaccharides with 4-deoxy-alpha-L-erythro-hex-4-enuronosyl groups at their non-reducing ends and beta-D-mannuronate at their reducing end.. Catalyzes the depolymerization of alginate by cleaving the beta-1,4 glycosidic bond between two adjacent sugar residues via a beta-elimination mechanism. May serve to degrade mislocalized alginate that is trapped in the periplasmic space. This Pseudomonas putida (strain GB-1) protein is Alginate lyase.